A 297-amino-acid chain; its full sequence is MVYLKGQIRKALSGFYYVYADGETYQTRARGNFRNRKITPLVGDEVLFESDNLTDGYVLEILPRRNELVRPPVANVDLGVVVMSMVSPNFSFNLLDRFLVSLEYKDIEPVIYLTKVDLLDEPQRQQVTEIKQIYEALGYAVIASEDVEATKELERFFPERLTVFMGQSGAGKSTLLNQISPELQLATAEISQSLGRGKHTTRHVELIPLYDGLVADTPGFSAIDFLEMEAVELPKQFPEFVAAASHCKFRECMHHKEPGCEVKRQVEAGTIATSRYENYLQFLMEIENRRPVYKKKS.

Residues 65–223 (RNELVRPPVA…VADTPGFSAI (159 aa)) enclose the CP-type G domain. Residues 114–117 (TKVD) and 166–174 (GQSGAGKST) contribute to the GTP site. 4 residues coordinate Zn(2+): Cys-247, Cys-252, His-254, and Cys-260.

The protein belongs to the TRAFAC class YlqF/YawG GTPase family. RsgA subfamily. Monomer. Associates with 30S ribosomal subunit, binds 16S rRNA. Zn(2+) serves as cofactor.

It is found in the cytoplasm. One of several proteins that assist in the late maturation steps of the functional core of the 30S ribosomal subunit. Helps release RbfA from mature subunits. May play a role in the assembly of ribosomal proteins into the subunit. Circularly permuted GTPase that catalyzes slow GTP hydrolysis, GTPase activity is stimulated by the 30S ribosomal subunit. This chain is Small ribosomal subunit biogenesis GTPase RsgA, found in Enterococcus faecalis (strain ATCC 700802 / V583).